A 333-amino-acid chain; its full sequence is Arginase (333 aa).

Position 1 is an N-acetylmethionine (methionine 1). A Phosphoserine modification is found at serine 16. Threonine 77 is modified (phosphothreonine). Residues histidine 123, aspartate 146, histidine 148, and aspartate 150 each contribute to the Mn(2+) site. Residues 148-152, 159-161, and aspartate 205 contribute to the substrate site; these read HADIN and SGN. Mn(2+) is bound by residues aspartate 256 and aspartate 258. Phosphothreonine is present on threonine 270. Positions 270 and 301 each coordinate substrate.

This sequence belongs to the arginase family. As to quaternary structure, homotrimer. The cofactor is Mn(2+).

It carries out the reaction L-arginine + H2O = urea + L-ornithine. Its pathway is nitrogen metabolism; urea cycle; L-ornithine and urea from L-arginine: step 1/1. This chain is Arginase (CAR1), found in Saccharomyces cerevisiae (strain ATCC 204508 / S288c) (Baker's yeast).